Here is a 640-residue protein sequence, read N- to C-terminus: ATP-dependent rRNA helicase spb4 (640 aa).

The short motif at 14-42 (WDAVTPALSEWVLEAMSSMGFTRMTPVQA) is the Q motif element. The Helicase ATP-binding domain occupies 45–249 (IPLFMAHKDV…RVGLRNPVKV (205 aa)). 58-65 (AVTGSGKT) serves as a coordination point for ATP. The DEAD box motif lies at 197–200 (DEAD). A Helicase C-terminal domain is found at 283-437 (ALKRIVSSVQ…SISFSDADAA (155 aa)). Residues 521–629 (AYKDKQREKR…VAKAAGAKAD (109 aa)) are a coiled coil. Disordered stretches follow at residues 531 to 593 (RKEL…EEEK) and 607 to 640 (RKKNEEERRLRRAVAKAAGAKADGDDEEEFQGFD). A compositionally biased stretch (basic and acidic residues) spans 577-593 (KSKQEKARWEKMTEEEK). A compositionally biased stretch (acidic residues) spans 630 to 640 (GDDEEEFQGFD).

The protein belongs to the DEAD box helicase family. DDX55/SPB4 subfamily. Component of pre-60S ribosomal complexes.

The protein resides in the nucleus. It is found in the nucleolus. It catalyses the reaction ATP + H2O = ADP + phosphate + H(+). In terms of biological role, ATP-binding RNA helicase involved in the biogenesis of 60S ribosomal subunits. Binds 90S pre-ribosomal particles and dissociates from pre-60S ribosomal particles after processing of 27SB pre-rRNA. Required for the normal formation of 18S rRNA through the processing of pre-rRNAs at sites A0, A1 and A2, and the normal formation of 25S and 5.8S rRNAs through the processing of pre-rRNAs at sites C1 and C2. The polypeptide is ATP-dependent rRNA helicase spb4 (Aspergillus fumigatus (strain ATCC MYA-4609 / CBS 101355 / FGSC A1100 / Af293) (Neosartorya fumigata)).